The following is a 462-amino-acid chain: Chitinase-like mite allergen Der p 18.0101 (462 aa).

The N-terminal stretch at 1-25 (MTRLSFTVLIFLAAYFGSNIRPNVA) is a signal peptide. In terms of domain architecture, GH18 spans 29–378 (PKTVCYYESW…HAINSNYFRG (350 aa)). Cys33 and Cys58 are joined by a disulfide. N-linked (GlcNAc...) asparagine glycosylation is found at Asn338 and Asn441. The region spanning 404-462 (VFHCHQEGFFRDKTYCAKYYECKKGDFGLEQTVHHCPNHSQAFDEVSRTCVDHAKIPGC) is the Chitin-binding type-2 domain. A disulfide bond links Cys439 and Cys453.

This sequence belongs to the glycosyl hydrolase 18 family. Chitinase class II subfamily. As to expression, expressed in the peritrophic matrix of the midgut, and only very weakly in fecal pellets.

The protein localises to the secreted. Functionally, probably a non-catalytic chitinase-like protein, which binds to insoluble chitin and enhances the activity of the catalytic chitinases. Has weak chitin-binding activity. The protein is Chitinase-like mite allergen Der p 18.0101 of Dermatophagoides pteronyssinus (European house dust mite).